The primary structure comprises 173 residues: MANPKNTADLAALKEKLEGANSIVLTEYRGLTVGQLQELRNNLGFDVEYSVAKNTLFKIAANEAGIEGLDEHLTGPTAIAFIKGEAVDAAKVITKFADDNKALVIKGGYMDGNALSADQVEAIAKLDNRETTLAKLAGAMKGSMAKAAAVFNAPATKMVRTAAALQDKKAAEA.

This sequence belongs to the universal ribosomal protein uL10 family. Part of the ribosomal stalk of the 50S ribosomal subunit. The N-terminus interacts with L11 and the large rRNA to form the base of the stalk. The C-terminus forms an elongated spine to which L12 dimers bind in a sequential fashion forming a multimeric L10(L12)X complex.

Functionally, forms part of the ribosomal stalk, playing a central role in the interaction of the ribosome with GTP-bound translation factors. The protein is Large ribosomal subunit protein uL10 of Corynebacterium aurimucosum (strain ATCC 700975 / DSM 44827 / CIP 107346 / CN-1) (Corynebacterium nigricans).